We begin with the raw amino-acid sequence, 93 residues long: YcgL domain-containing protein KPN78578_22820 (93 aa).

In terms of domain architecture, YcgL spans 1–85 (MFCVIYRSTK…PSENLLKKHL (85 aa)).

The protein is YcgL domain-containing protein KPN78578_22820 of Klebsiella pneumoniae subsp. pneumoniae (strain ATCC 700721 / MGH 78578).